A 301-amino-acid polypeptide reads, in one-letter code: tRNA pseudouridine synthase B (301 aa).

D38 functions as the Nucleophile in the catalytic mechanism.

Belongs to the pseudouridine synthase TruB family. Type 1 subfamily.

The catalysed reaction is uridine(55) in tRNA = pseudouridine(55) in tRNA. Functionally, responsible for synthesis of pseudouridine from uracil-55 in the psi GC loop of transfer RNAs. This Lacticaseibacillus paracasei (strain ATCC 334 / BCRC 17002 / CCUG 31169 / CIP 107868 / KCTC 3260 / NRRL B-441) (Lactobacillus paracasei) protein is tRNA pseudouridine synthase B.